The following is a 93-amino-acid chain: Neurophysin 1 (93 aa).

Cystine bridges form between C10–C54, C13–C27, C21–C44, C28–C34, C61–C74, C68–C86, and C75–C80.

The protein belongs to the vasopressin/oxytocin family.

The protein localises to the secreted. In terms of biological role, neurophysin 1 specifically binds oxytocin. The protein is Neurophysin 1 of Anser anser anser (Western greylag goose).